The chain runs to 412 residues: CHRNA7-FAM7A fusion protein (412 aa).

A run of 5 helical transmembrane segments spans residues glycine 144–leucine 164, isoleucine 172–isoleucine 192, glutamine 205–leucine 225, tryptophan 240–arginine 254, and leucine 380–alanine 400.

This sequence belongs to the ligand-gated ion channel (TC 1.A.9) family. Expressed in hippocampus.

The protein localises to the membrane. In Homo sapiens (Human), this protein is CHRNA7-FAM7A fusion protein (CHRFAM7A).